Consider the following 156-residue polypeptide: SsrA-binding protein (156 aa).

Residues 130–156 are disordered; the sequence is KFDKRDDLKKKDAKRDIDRALRDKQKY. The segment covering 132 to 156 has biased composition (basic and acidic residues); it reads DKRDDLKKKDAKRDIDRALRDKQKY.

This sequence belongs to the SmpB family.

The protein resides in the cytoplasm. Functionally, required for rescue of stalled ribosomes mediated by trans-translation. Binds to transfer-messenger RNA (tmRNA), required for stable association of tmRNA with ribosomes. tmRNA and SmpB together mimic tRNA shape, replacing the anticodon stem-loop with SmpB. tmRNA is encoded by the ssrA gene; the 2 termini fold to resemble tRNA(Ala) and it encodes a 'tag peptide', a short internal open reading frame. During trans-translation Ala-aminoacylated tmRNA acts like a tRNA, entering the A-site of stalled ribosomes, displacing the stalled mRNA. The ribosome then switches to translate the ORF on the tmRNA; the nascent peptide is terminated with the 'tag peptide' encoded by the tmRNA and targeted for degradation. The ribosome is freed to recommence translation, which seems to be the essential function of trans-translation. The sequence is that of SsrA-binding protein from Exiguobacterium sibiricum (strain DSM 17290 / CCUG 55495 / CIP 109462 / JCM 13490 / 255-15).